Reading from the N-terminus, the 900-residue chain is Protein translocase subunit SecA (900 aa).

ATP-binding positions include Gln87, 105 to 109 (GEGKT), and Asp512. Residues 842–852 (QQRREEAERLA) are compositionally biased toward basic and acidic residues. A disordered region spans residues 842–900 (QQRREEAERLARQQQLSHQEEDSLNTGSPAQADRKIGRNDPCPCGSGKKYKQCHGRLQK). Zn(2+)-binding residues include Cys883, Cys885, Cys894, and His895. Positions 889-900 (KKYKQCHGRLQK) are enriched in basic residues.

It belongs to the SecA family. In terms of assembly, monomer and homodimer. Part of the essential Sec protein translocation apparatus which comprises SecA, SecYEG and auxiliary proteins SecDF-YajC and YidC. The cofactor is Zn(2+).

It is found in the cell inner membrane. The protein localises to the cytoplasm. It carries out the reaction ATP + H2O + cellular proteinSide 1 = ADP + phosphate + cellular proteinSide 2.. Its function is as follows. Part of the Sec protein translocase complex. Interacts with the SecYEG preprotein conducting channel. Has a central role in coupling the hydrolysis of ATP to the transfer of proteins into and across the cell membrane, serving both as a receptor for the preprotein-SecB complex and as an ATP-driven molecular motor driving the stepwise translocation of polypeptide chains across the membrane. The polypeptide is Protein translocase subunit SecA (Pectobacterium carotovorum subsp. carotovorum (strain PC1)).